We begin with the raw amino-acid sequence, 637 residues long: Phospholipase B (637 aa).

The signal sequence occupies residues 1–19; that stretch reads MSIATATFAFSLFATIAFA. Residues 46 to 572 enclose the PLA2c domain; it reads DCPSNVTWIR…DTWCWAGDDN (527 aa). N-linked (GlcNAc...) asparagine glycosylation is found at N50, N56, N122, N231, N246, N272, N314, N343, N387, N433, N481, N501, N528, N553, N572, N594, and N606.

It belongs to the lysophospholipase family. Post-translationally, N-glycosylated.

Its subcellular location is the secreted. It localises to the cell membrane. The catalysed reaction is a 1-acyl-sn-glycero-3-phosphocholine + H2O = sn-glycerol 3-phosphocholine + a fatty acid + H(+). Its activity is regulated as follows. Inhibited by Fe(3+) ion. Functionally, exhibits phospholipase B (PLB), lysophospholipase (LPL) and lysophospholipase/transacylase (LPTA) activities. The chain is Phospholipase B (PLB1) from Cryptococcus neoformans var. grubii serotype A (strain H99 / ATCC 208821 / CBS 10515 / FGSC 9487) (Filobasidiella neoformans var. grubii).